The primary structure comprises 364 residues: DNA replication and repair protein RecF (364 aa).

30–37 (GNNGQGKT) contacts ATP.

The protein belongs to the RecF family.

The protein resides in the cytoplasm. Functionally, the RecF protein is involved in DNA metabolism; it is required for DNA replication and normal SOS inducibility. RecF binds preferentially to single-stranded, linear DNA. It also seems to bind ATP. This chain is DNA replication and repair protein RecF, found in Citrifermentans bemidjiense (strain ATCC BAA-1014 / DSM 16622 / JCM 12645 / Bem) (Geobacter bemidjiensis).